The sequence spans 250 residues: Pyridoxine 5'-phosphate synthase (250 aa).

Asn11 is a binding site for 3-amino-2-oxopropyl phosphate. Position 13–14 (13–14) interacts with 1-deoxy-D-xylulose 5-phosphate; the sequence is DH. Arg22 contacts 3-amino-2-oxopropyl phosphate. Catalysis depends on His47, which acts as the Proton acceptor. 2 residues coordinate 1-deoxy-D-xylulose 5-phosphate: Arg49 and His54. The active-site Proton acceptor is the Glu74. Thr104 contributes to the 1-deoxy-D-xylulose 5-phosphate binding site. The Proton donor role is filled by His198. 3-amino-2-oxopropyl phosphate-binding positions include Gly199 and 220 to 221; that span reads GY.

The protein belongs to the PNP synthase family. In terms of assembly, homooctamer; tetramer of dimers.

Its subcellular location is the cytoplasm. The catalysed reaction is 3-amino-2-oxopropyl phosphate + 1-deoxy-D-xylulose 5-phosphate = pyridoxine 5'-phosphate + phosphate + 2 H2O + H(+). Its pathway is cofactor biosynthesis; pyridoxine 5'-phosphate biosynthesis; pyridoxine 5'-phosphate from D-erythrose 4-phosphate: step 5/5. In terms of biological role, catalyzes the complicated ring closure reaction between the two acyclic compounds 1-deoxy-D-xylulose-5-phosphate (DXP) and 3-amino-2-oxopropyl phosphate (1-amino-acetone-3-phosphate or AAP) to form pyridoxine 5'-phosphate (PNP) and inorganic phosphate. The polypeptide is Pyridoxine 5'-phosphate synthase (Bradyrhizobium diazoefficiens (strain JCM 10833 / BCRC 13528 / IAM 13628 / NBRC 14792 / USDA 110)).